An 814-amino-acid chain; its full sequence is Putative serine/threonine-protein kinase-like protein CCR3 (814 aa).

Residues 1 to 30 form the signal peptide; it reads MKRFINSTVTFSVTVTIAVIIFFLLSPVTS. Residues asparagine 6, asparagine 68, asparagine 136, asparagine 215, asparagine 226, asparagine 251, asparagine 260, asparagine 275, asparagine 299, and asparagine 309 are each glycosylated (N-linked (GlcNAc...) asparagine). Topologically, residues 31–393 are extracellular; it reads LGSGSTYAVV…SSPPSKALTR (363 aa). Residues 366 to 381 show a composition bias toward pro residues; it reads SQFPLPPPPPPPPPSP. Residues 366-388 form a disordered region; the sequence is SQFPLPPPPPPPPPSPSTSSPPS. The helical transmembrane segment at 394–414 threads the bilayer; that stretch reads GLLAFAIVGSVGAFAGICSVV. Residues 415–814 are Cytoplasmic-facing; it reads YCLWTGVCLG…SSGICSIVSD (400 aa). A disordered region spans residues 433 to 478; it reads QPTITRGGSNSRSNSSNSRSLSIRRQGSRMLSMRRQRSGTSSMKHA. The segment covering 441 to 457 has biased composition (low complexity); sequence SNSRSNSSNSRSLSIRR. In terms of domain architecture, Protein kinase spans 496–794; the sequence is FSLENKIGSG…DIVGNLERAL (299 aa). ATP contacts are provided by residues 502–510 and lysine 524; that span reads IGSGSFGVV. The active-site Proton acceptor is aspartate 631.

This sequence belongs to the protein kinase superfamily. Ser/Thr protein kinase family. Homodimer. Expressed in roots, leaves, shoot apical meristems (SAM), and floral buds.

Its subcellular location is the membrane. It catalyses the reaction L-seryl-[protein] + ATP = O-phospho-L-seryl-[protein] + ADP + H(+). The catalysed reaction is L-threonyl-[protein] + ATP = O-phospho-L-threonyl-[protein] + ADP + H(+). Serine/threonine-protein kinase. The sequence is that of Putative serine/threonine-protein kinase-like protein CCR3 (CCR3) from Arabidopsis thaliana (Mouse-ear cress).